A 176-amino-acid polypeptide reads, in one-letter code: Ribosome maturation factor RimM (176 aa).

The region spanning 97–176 (EDEFYWRDLI…QITVDWDPDF (80 aa)) is the PRC barrel domain.

This sequence belongs to the RimM family. As to quaternary structure, binds ribosomal protein uS19.

The protein localises to the cytoplasm. Functionally, an accessory protein needed during the final step in the assembly of 30S ribosomal subunit, possibly for assembly of the head region. Essential for efficient processing of 16S rRNA. May be needed both before and after RbfA during the maturation of 16S rRNA. It has affinity for free ribosomal 30S subunits but not for 70S ribosomes. This chain is Ribosome maturation factor RimM, found in Shewanella sediminis (strain HAW-EB3).